The following is a 126-amino-acid chain: MALSKEDILNAIAEMSVMDVVELVEAMEEKFGVSAAAAVAVAAPAAGDAGAAAAEEQTEFDVVLASAGEKKVNVIKAVRAITGLGLKEAKAMVDGAPSTVKEALSKDDAEAAKKELEEAGATVELK.

It belongs to the bacterial ribosomal protein bL12 family. In terms of assembly, homodimer. Part of the ribosomal stalk of the 50S ribosomal subunit. Forms a multimeric L10(L12)X complex, where L10 forms an elongated spine to which 2 to 4 L12 dimers bind in a sequential fashion. Binds GTP-bound translation factors.

Its function is as follows. Forms part of the ribosomal stalk which helps the ribosome interact with GTP-bound translation factors. Is thus essential for accurate translation. This is Large ribosomal subunit protein bL12 from Teredinibacter turnerae (strain ATCC 39867 / T7901).